A 156-amino-acid polypeptide reads, in one-letter code: ATP synthase subunit b (156 aa).

The helical transmembrane segment at 7-27 threads the bilayer; it reads LFAQIIVFFGLVWFTMKFVWP.

Belongs to the ATPase B chain family. F-type ATPases have 2 components, F(1) - the catalytic core - and F(0) - the membrane proton channel. F(1) has five subunits: alpha(3), beta(3), gamma(1), delta(1), epsilon(1). F(0) has three main subunits: a(1), b(2) and c(10-14). The alpha and beta chains form an alternating ring which encloses part of the gamma chain. F(1) is attached to F(0) by a central stalk formed by the gamma and epsilon chains, while a peripheral stalk is formed by the delta and b chains.

The protein resides in the cell inner membrane. Functionally, f(1)F(0) ATP synthase produces ATP from ADP in the presence of a proton or sodium gradient. F-type ATPases consist of two structural domains, F(1) containing the extramembraneous catalytic core and F(0) containing the membrane proton channel, linked together by a central stalk and a peripheral stalk. During catalysis, ATP synthesis in the catalytic domain of F(1) is coupled via a rotary mechanism of the central stalk subunits to proton translocation. In terms of biological role, component of the F(0) channel, it forms part of the peripheral stalk, linking F(1) to F(0). The chain is ATP synthase subunit b from Neisseria gonorrhoeae (strain NCCP11945).